Consider the following 1026-residue polypeptide: MRFFALFIYRPVATILIAAAITLCGILGFRLLPVAPLPQVDFPVIMVSASLPGASPETMASSVATPLERSLGRIAGVNEMTSSSSLGSTRIILEFNFDRDINGAARDVQAAINAAQSLLPGGMPSRPTYRRANPSDAPIMILTLTSESWSQGKLYDFASTQLAQTIAQIDGVGDVDVGGSSLPAVRVGLNPQALFNQGVSLDEVREAIDSANVRRPQGAIEDSVHRWQIQTNDELKTAAEYQPLIIHYNNGAAVRLGDVASVTDSVQDVRNAGMTNAKPAILLMIRKLPEANIIQTVDGIRAKLPELRAMIPAAIDLQIAQDRSPTIRASLQEVEETLAISVALVILVVFLFLRSGRATLIPAVAVPVSLIGTFAAMYLCGFSLNNLSLMALTIATGFVVDDAIVVLENIARHLEAGMKPLQAALQGTREVGFTVISMSLSLVAVFLPLLLMGGLPGRLLREFAVTLSVAIGISLVVSLTLTPMMCGWMLKSSKPRTQLRKRGVGRLLVALQQGYGTSLKWVLNHTRLVGVVFLGTVALNIWLYIAIPKTFFPEQDTGVLMGGIQADQSISFQAMRGKLQDFMKIIRDDPAVNNVTGFTGGSRVNSGMMFITLKPRGERKETAQQVIDRLRVKLAKEPGARLFLMAVQDIRVGGRQANASYQYTLLSDSLAALREWEPKIRKALSALPQLADVNSDQQDNGAEMNLIYDRDTMSRLGIDVQAANSLLNNAFGQRQISTIYQPMNQYKVVMEVDPRYTQDISALEKMFVINRDGKAIPLSYFAQWRPANAPLSVNHQGLSAASTIAFNLPTGTSLSQATEAINRTMTQLGVPPTVRGSFSGTAQVFQQTMNSQLILIVAAIATVYIVLGILYESYVHPLTILSTLPSAGVGALLALELFNAPFSLIALIGIMLLIGIVKKNAIMMVDFALEAQRSGGLTPEQAIFQACLLRFRPIMMTTLAALFGALPLVLSDGDGSELRQPLGITIVGGLVMSQLLTLYTTPVVYLFFDRLRLRFSRKNSKPVVEI.

The next 11 helical transmembrane spans lie at 15–35 (ILIA…LPVA), 333–353 (EVEE…FLFL), 360–380 (LIPA…MYLC), 387–407 (LSLM…IVVL), 431–451 (VGFT…PLLL), 463–483 (FAVT…TLTP), 528–548 (LVGV…IAIP), 853–873 (LILI…LYES), 897–917 (LFNA…IGIV), 953–973 (PIMM…LSDG), and 984–1004 (ITIV…TPVV).

The protein belongs to the resistance-nodulation-cell division (RND) (TC 2.A.6) family. MdtC subfamily. In terms of assembly, part of a tripartite efflux system composed of MdtA, MdtB and MdtC. MdtC forms a heteromultimer with MdtB.

Its subcellular location is the cell inner membrane. The chain is Multidrug resistance protein MdtC from Salmonella heidelberg (strain SL476).